We begin with the raw amino-acid sequence, 426 residues long: MTSSADLTNLKELLSLYKSLRFSDSAAIEKYNSLVEWGTSTYWKIGVQKVANVETSISDYYDEVKNKPFNIDPGYYIFLPVYFGSVFIYSKGKNMVELGSGNSFQIPDDMRSVCNKVLDGDNGIDFLRFVLLNNRWIMEDAISKYQSPVNIFKLASEYGLNIPNYLEIEIEEDTLFDDELYSIIERSFDDNFPKISISYIKLGELRRQVVDFFKFSFMYIESIKVDRIGDNIFIPSVITKSGKKILVKDVDHLIRSKVREHTFVKVKKKNTFSILYDYDGNGTETRGEVIKRIIDTIGRDYYVNGKYFSKVGSAGLKQLTNKLNINECTTVDELVDEINKSGTVKRKIKTQSAFDLSRECLGYPEADFITLVNNMRFKIENCKVVNFNIENTNCLNNPSIETIYGNFNQFVSIFNIVTDVKKRLFE.

It belongs to the orthopoxvirus OPG148 family. As to quaternary structure, interacts with the DNA polymerase catalytic subunit OPG071. Interacts with UDG/OPG116. Component of the uracil-DNA glycosylase(UDG)-OPG148-polymerase complex; OPG148 and UDG form a heterodimeric processivity factor that associates with OPG071 to form the processive polymerase holoenzyme. Interacts with OPG117.

Functionally, plays an essential role in viral DNA replication by acting as the polymerase processivity factor together with protein OPG116. Serves as a bridge which links the DNA polymerase OPG071 and the uracil DNA glycosylase. This chain is DNA polymerase processivity factor component OPG148 (OPG148), found in Variola virus (isolate Human/India/Ind3/1967) (VARV).